The sequence spans 25 residues: Pregnancy-associated glycoprotein 74 (25 aa).

N-linked (GlcNAc...) asparagine glycans are attached at residues N4 and N21.

The protein belongs to the peptidase A1 family. In terms of processing, N-glycosylated. In terms of tissue distribution, placental cotyledons.

The protein localises to the secreted. It is found in the extracellular space. The sequence is that of Pregnancy-associated glycoprotein 74 from Bison bison (American bison).